The sequence spans 679 residues: Methionine--tRNA ligase (679 aa).

4 residues coordinate Zn(2+): Cys147, Cys150, Cys160, and Cys163. The short motif at 332–336 (KISTS) is the 'KMSKS' region element. Thr335 contacts ATP. In terms of domain architecture, tRNA-binding spans 578 to 679 (DFMKLDIRVG…REVKPGSEVK (102 aa)).

The protein belongs to the class-I aminoacyl-tRNA synthetase family. MetG type 1 subfamily. In terms of assembly, homodimer. It depends on Zn(2+) as a cofactor.

The protein localises to the cytoplasm. The enzyme catalyses tRNA(Met) + L-methionine + ATP = L-methionyl-tRNA(Met) + AMP + diphosphate. In terms of biological role, is required not only for elongation of protein synthesis but also for the initiation of all mRNA translation through initiator tRNA(fMet) aminoacylation. The chain is Methionine--tRNA ligase from Bacteroides fragilis (strain YCH46).